A 993-amino-acid polypeptide reads, in one-letter code: ATP-dependent DNA helicase MPH1 (993 aa).

The 168-residue stretch at 94-261 (IVHKSLFQNT…EVVNNLDISK (168 aa)) folds into the Helicase ATP-binding domain. 107–114 (IPTGMGKT) provides a ligand contact to ATP. The DEAH box signature appears at 209–212 (DEAH). In terms of domain architecture, Helicase C-terminal spans 507-655 (KVERLHRQEQ…CIDYKKSDRI (149 aa)). Residues 530–551 (NDKLERSARRTGSSEEAQISGM) form a disordered region. Residues 539–551 (RTGSSEEAQISGM) show a composition bias toward polar residues. The tract at residues 751–810 (LVTSNENPSKKRKIFKALDNLENDSTEEASSSLETEDEEVSDDNNVFIAEGQNGCQKDLE) is FKH1-binding region. Thr-776 and Thr-785 each carry phosphothreonine.

The protein belongs to the DEAD box helicase family. DEAH subfamily. FANCM sub-subfamily. In terms of assembly, interacts with the MHF histone-fold complex composed of MHF1 and MHF2 to form the FANCM-MHF complex. Interacts with FHK1. In terms of processing, phosphorylation at both Thr-776 and Thr-785 is required for the interaction with FKH1.

The protein resides in the nucleus. The catalysed reaction is ATP + H2O = ADP + phosphate + H(+). Functionally, ATP-dependent DNA helicase involved in DNA damage repair by homologous recombination and in genome maintenance. Capable of unwinding D-loops. Plays a role in limiting crossover recombinants during mitotic DNA double-strand break (DSB) repair. Prevents crossovers between ectopic sequences by removing substrates for MUS81-MMS4 or RAD1-RAD10 cleavage. Component of a FANCM-MHF complex which promotes gene conversion at blocked replication forks, probably by reversal of the stalled fork. Binds to flap-structured DNA but not to non-flap nicked DNA, and participates in Okazaki fragment processing by stimulating the endonuclease activities of FEN1 and DNA2. Involved in recombination donor preference during mating-type switching via interaction with FKH1. The sequence is that of ATP-dependent DNA helicase MPH1 from Saccharomyces cerevisiae (strain ATCC 204508 / S288c) (Baker's yeast).